The primary structure comprises 288 residues: MKDRTQELRTAKDSDDDDDVTVTVDRDRFMDEFFEQVEEIRGFIDKISENVEEVKRKHSAILASPNPDEKTKEELEELMSDIKKTANKVRSKLKSIEQSIEQEEGLNRSSADLRIRKTQHSTLSRKFVEVMSEYNATQSDYRERCKGRIQRQLEITGRTTTSEELEDMLESGNPAIFASGIIMDSSISKQALSEIETRHSEIIKLENSIRELHDMFMDMAMLVESQGEMIDRIEYNVEHSVDYVERAVSDTKKAVKYQSKARRKKIMIVICCVVLGIVIASTFGGIFG.

Basic and acidic residues predominate over residues 1–13; the sequence is MKDRTQELRTAKD. The disordered stretch occupies residues 1 to 20; the sequence is MKDRTQELRTAKDSDDDDDV. Residues 1–265 are Cytoplasmic-facing; it reads MKDRTQELRT…KYQSKARRKK (265 aa). Residues Ser-14, Ser-64, and Ser-95 each carry the phosphoserine modification. Residues 68–109 adopt a coiled-coil conformation; the sequence is DEKTKEELEELMSDIKKTANKVRSKLKSIEQSIEQEEGLNRS. A Phosphoserine; by DAPK1 modification is found at Ser-188. The region spanning 192–254 is the t-SNARE coiled-coil homology domain; it reads LSEIETRHSE…ERAVSDTKKA (63 aa). Glycyl lysine isopeptide (Lys-Gly) (interchain with G-Cter in SUMO) cross-links involve residues Lys-252, Lys-253, and Lys-256. A helical; Anchor for type IV membrane protein membrane pass occupies residues 266 to 288; sequence IMIVICCVVLGIVIASTFGGIFG.

This sequence belongs to the syntaxin family. Part of the SNARE core complex containing SNAP25, VAMP2 and STX1A; this complex constitutes the basic catalytic machinery of the complex neurotransmitter release apparatus. The SNARE complex interacts with CPLX1. Interacts with STXBP1. The interaction with STXBP1 promotes assembly of the SNARE complex. Interacts (via C-terminus) with KCNB1 (via C-terminus); the interaction increases in a calcium-dependent manner and induces a pore-independent enhancement of exocytosis in neuroendocrine cells, chromaffin cells, pancreatic beta cells and from the soma of dorsal root ganglia (DRG) neurons. Interacts with SYTL4. Interacts with STXBP6. Interacts with PLCL1 (via C2 domain). Interacts with OTOF. Interacts with LGI3. Interacts (via the H3 domain) with SLC6A4 (via the N-terminus); this interaction regulates SLC4A6 channel conductance in thalamocortical neurons. Interacts with SYT6 and SYT8; the interaction is Ca(2+)-dependent. Interacts with VAMP8. Interacts with SNAP23. Interacts with VAPA and SYBU. Interacts with PRRT2. Interacts with SEPT8. Interacts with STXBP5L. Interacts with synaptotagmin-1/SYT1. Interacts with SEPTIN5; in the cerebellar cortex. Interacts with SEPTIN4; in the striatum. Post-translationally, phosphorylated by CK2. Phosphorylation at Ser-188 by DAPK1 significantly decreases its interaction with STXBP1. In terms of processing, sumoylated, sumoylation is required for regulation of synaptic vesicle endocytosis. (Microbial infection) Targeted and hydrolyzed by C.botulinum neurotoxin type C (BoNT/C) which inhibits neurotransmitter release. Probably hydrolyzes the 253-Lys-|-Ala-254 bond.

It localises to the cytoplasmic vesicle. The protein resides in the secretory vesicle. Its subcellular location is the synaptic vesicle membrane. The protein localises to the synapse. It is found in the synaptosome. It localises to the cell membrane. In terms of biological role, plays an essential role in hormone and neurotransmitter calcium-dependent exocytosis and endocytosis. Part of the SNARE (Soluble NSF Attachment Receptor) complex composed of SNAP25, STX1A and VAMP2 which mediates the fusion of synaptic vesicles with the presynaptic plasma membrane. STX1A and SNAP25 are localized on the plasma membrane while VAMP2 resides in synaptic vesicles. The pairing of the three SNAREs from the N-terminal SNARE motifs to the C-terminal anchors leads to the formation of the SNARE complex, which brings membranes into close proximity and results in final fusion. Participates in the calcium-dependent regulation of acrosomal exocytosis in sperm. Also plays an important role in the exocytosis of hormones such as insulin or glucagon-like peptide 1 (GLP-1). In Bos taurus (Bovine), this protein is Syntaxin-1A (STX1A).